Reading from the N-terminus, the 358-residue chain is 3-dehydroquinate synthase (358 aa).

NAD(+) contacts are provided by residues 72–77 (GGERVK), 106–110 (GALLD), 130–131 (ST), Lys-143, and Lys-151. Residues Glu-184, His-245, and His-261 each contribute to the Zn(2+) site.

This sequence belongs to the sugar phosphate cyclases superfamily. Dehydroquinate synthase family. The cofactor is NAD(+). Co(2+) serves as cofactor. Requires Zn(2+) as cofactor.

Its subcellular location is the cytoplasm. It carries out the reaction 7-phospho-2-dehydro-3-deoxy-D-arabino-heptonate = 3-dehydroquinate + phosphate. It participates in metabolic intermediate biosynthesis; chorismate biosynthesis; chorismate from D-erythrose 4-phosphate and phosphoenolpyruvate: step 2/7. In terms of biological role, catalyzes the conversion of 3-deoxy-D-arabino-heptulosonate 7-phosphate (DAHP) to dehydroquinate (DHQ). In Aeropyrum pernix (strain ATCC 700893 / DSM 11879 / JCM 9820 / NBRC 100138 / K1), this protein is 3-dehydroquinate synthase (aroB).